A 674-amino-acid chain; its full sequence is Carbon monoxide dehydrogenase/acetyl-CoA synthase subunit beta (674 aa).

The tract at residues 1–25 (MPRFRDLSHNCRPSEAPRVMEPKNR) is disordered. Cysteine 59, cysteine 67, cysteine 68, cysteine 71, cysteine 76, and cysteine 90 together coordinate [4Fe-4S] cluster. [Ni-4Fe-4S] cluster is bound by residues histidine 283, cysteine 317, cysteine 355, cysteine 470, cysteine 500, and cysteine 550.

As to quaternary structure, tetramer of two alpha and two beta chains. It depends on [Ni-Fe-S] cluster as a cofactor. [4Fe-4S] cluster is required as a cofactor.

It carries out the reaction CO + 2 oxidized [2Fe-2S]-[ferredoxin] + H2O = 2 reduced [2Fe-2S]-[ferredoxin] + CO2 + 2 H(+). Its function is as follows. The beta subunit (this protein) generates CO from CO(2), while the alpha subunit combines the CO with CoA and a methyl group to form acetyl-CoA. The methyl group, which is incorporated into acetyl-CoA, is transferred to the alpha subunit by a corrinoid iron-sulfur protein. This is Carbon monoxide dehydrogenase/acetyl-CoA synthase subunit beta from Moorella thermoacetica (Clostridium thermoaceticum).